Here is a 379-residue protein sequence, read N- to C-terminus: UPF0450 protein C17orf58 homolog (379 aa).

The signal sequence occupies residues Met-1–Ala-17. 2 disordered regions span residues Arg-76–Thr-95 and Thr-162–His-194. Over residues Ser-180–His-194 the composition is skewed to basic and acidic residues. Disulfide bonds link Cys-234/Cys-308, Cys-238/Cys-312, and Cys-249/Cys-378. An NTR domain is found at Cys-234–Cys-378.

This sequence belongs to the UPF0450 family.

This chain is UPF0450 protein C17orf58 homolog, found in Xenopus laevis (African clawed frog).